Reading from the N-terminus, the 687-residue chain is Mu-like prophage FluMu transposase A (687 aa).

The HTH Mu-type domain maps to 8-74; the sequence is THYSVYELAN…ELLLKTTPEQ (67 aa). The segment at residues 398-417 is a DNA-binding region (H-T-H motif); it reads PIERAFSHGGLGDYVDKHLL.

Its function is as follows. This transposase is essential for integration, replication-transposition, and excision of Mu-like viral DNA. The chain is Mu-like prophage FluMu transposase A from Haemophilus influenzae (strain ATCC 51907 / DSM 11121 / KW20 / Rd).